The following is a 326-amino-acid chain: Delta-aminolevulinic acid dehydratase (326 aa).

Cys125, Cys127, and Cys135 together coordinate Zn(2+). Lys200 acts as the Schiff-base intermediate with substrate in catalysis. 5-aminolevulinate is bound by residues Arg210 and Arg222. Glu238 lines the Mg(2+) pocket. The active-site Schiff-base intermediate with substrate is Lys253. Ser279 contributes to the 5-aminolevulinate binding site.

It belongs to the ALAD family. As to quaternary structure, homooctamer. The cofactor is Zn(2+).

The catalysed reaction is 2 5-aminolevulinate = porphobilinogen + 2 H2O + H(+). Its pathway is porphyrin-containing compound metabolism; protoporphyrin-IX biosynthesis; coproporphyrinogen-III from 5-aminolevulinate: step 1/4. Functionally, catalyzes an early step in the biosynthesis of tetrapyrroles. Binds two molecules of 5-aminolevulinate per subunit, each at a distinct site, and catalyzes their condensation to form porphobilinogen. This chain is Delta-aminolevulinic acid dehydratase (hemB), found in Methanothermobacter thermautotrophicus (strain ATCC 29096 / DSM 1053 / JCM 10044 / NBRC 100330 / Delta H) (Methanobacterium thermoautotrophicum).